The following is a 189-amino-acid chain: Elongation factor P (189 aa).

N6-(3,6-diaminohexanoyl)-5-hydroxylysine is present on Lys34.

This sequence belongs to the elongation factor P family. In terms of processing, may be beta-lysylated on the epsilon-amino group of Lys-34 by the combined action of EpmA and EpmB, and then hydroxylated on the C5 position of the same residue by EpmC (if this protein is present). Lysylation is critical for the stimulatory effect of EF-P on peptide-bond formation. The lysylation moiety may extend toward the peptidyltransferase center and stabilize the terminal 3-CCA end of the tRNA. Hydroxylation of the C5 position on Lys-34 may allow additional potential stabilizing hydrogen-bond interactions with the P-tRNA.

The protein resides in the cytoplasm. The protein operates within protein biosynthesis; polypeptide chain elongation. Involved in peptide bond synthesis. Alleviates ribosome stalling that occurs when 3 or more consecutive Pro residues or the sequence PPG is present in a protein, possibly by augmenting the peptidyl transferase activity of the ribosome. Modification of Lys-34 is required for alleviation. The polypeptide is Elongation factor P (Acinetobacter baumannii (strain AB307-0294)).